The primary structure comprises 266 residues: MQGSTRRMGVMTDVHRRFLQLLMTHGVLEEWDVKRLQTHCYKVHDRNATVDKLEDFINNINSVLESLYIEIKRGVTEDDGRPIYALVNLATTSISKMATDFAENELDLFRKALELIIDSETGFASSTNILNLVDQLKGKKMRKKEAEQVLQKFVQNKWLIEKEGEFTLHGRAILEMEQYIRETYPDAVKICNICHSLLIQGQSCETCGIRMHLPCVAKYFQSNAEPRCPHCNDYWPHEIPKVFDPEKERESGVLKSNKKSLRSRQH.

The tract at residues 1 to 102 (MQGSTRRMGV…SISKMATDFA (102 aa)) is interaction with NSMCE3. Residues 191 to 232 (CNICHSLLIQGQSCETCGIRMHLPCVAKYFQSNAEPRCPHCN) form an RING-type; atypical zinc finger. Positions 246–266 (EKERESGVLKSNKKSLRSRQH) are disordered. Ser-251 is modified (phosphoserine). Positions 256-266 (SNKKSLRSRQH) are enriched in basic residues.

The protein belongs to the NSE1 family. Component of the SMC5-SMC6 complex which consists at least of SMC5, SMC6, NSMCE2, NSMCE1, NSMCE4A or EID3 and NSMCE3. NSMCE1, NSMCE4A or EID3 and NSMCE3 probably form a subcomplex that bridges the head domains of the SMC5-SMC6 heterodimer. Interacts with NSMCE3. Interacts with MAGEF1. Ubiquitinated.

Its subcellular location is the nucleus. The protein localises to the chromosome. It localises to the telomere. The catalysed reaction is S-ubiquitinyl-[E2 ubiquitin-conjugating enzyme]-L-cysteine + [acceptor protein]-L-lysine = [E2 ubiquitin-conjugating enzyme]-L-cysteine + N(6)-ubiquitinyl-[acceptor protein]-L-lysine.. In terms of biological role, RING-type zinc finger-containing E3 ubiquitin ligase that assembles with melanoma antigen protein (MAGE) to catalyze the direct transfer of ubiquitin from E2 ubiquitin-conjugating enzyme to a specific substrate. Within MAGE-RING ubiquitin ligase complex, MAGE stimulates and specifies ubiquitin ligase activity likely through recruitment and/or stabilization of the E2 ubiquitin-conjugating enzyme at the E3:substrate complex. Involved in maintenance of genome integrity, DNA damage response and DNA repair. NSMCE3/MAGEG1 and NSMCE1 ubiquitin ligase are components of SMC5-SMC6 complex and may positively regulate homologous recombination-mediated DNA repair. MAGEF1-NSMCE1 ubiquitin ligase promotes proteasomal degradation of MMS19, a key component of the cytosolic iron-sulfur protein assembly (CIA) machinery. Down-regulation of MMS19 impairs the activity of several DNA repair and metabolism enzymes such as ERCC2/XPD, FANCJ, RTEL1 and POLD1 that require iron-sulfur clusters as cofactors. This chain is Non-structural maintenance of chromosomes element 1 homolog, found in Homo sapiens (Human).